Here is a 622-residue protein sequence, read N- to C-terminus: Low affinity potassium transport system protein Kup (622 aa).

Helical transmembrane passes span 9–29 (LPAI…TSPL), 49–69 (VFGF…IKYL), 103–123 (VIMG…TPAI), 137–157 (PQLD…LFMI), 165–185 (VGKL…GLGL), 213–233 (VSFI…ALYA), 247–267 (WFTV…ALLL), 276–296 (PFFL…AALA), 337–357 (IYIP…IVSF), 363–383 (LAAA…ILST), 396–416 (FVAL…TANL), and 419–439 (LLSG…VMTT).

It belongs to the HAK/KUP transporter (TC 2.A.72) family.

The protein resides in the cell inner membrane. It carries out the reaction K(+)(in) + H(+)(in) = K(+)(out) + H(+)(out). In terms of biological role, responsible for the low-affinity transport of potassium into the cell. Likely operates as a K(+):H(+) symporter. The sequence is that of Low affinity potassium transport system protein Kup from Escherichia fergusonii (strain ATCC 35469 / DSM 13698 / CCUG 18766 / IAM 14443 / JCM 21226 / LMG 7866 / NBRC 102419 / NCTC 12128 / CDC 0568-73).